Here is a 247-residue protein sequence, read N- to C-terminus: tRNA (guanine-N(7)-)-methyltransferase (247 aa).

Residues Gly-70, 93–94 (EI), 128–129 (NA), and Leu-148 contribute to the S-adenosyl-L-methionine site. The active site involves Asp-151. Residue 226-228 (SEE) participates in S-adenosyl-L-methionine binding.

It belongs to the class I-like SAM-binding methyltransferase superfamily. TrmB family.

The protein resides in the nucleus. The catalysed reaction is guanosine(46) in tRNA + S-adenosyl-L-methionine = N(7)-methylguanosine(46) in tRNA + S-adenosyl-L-homocysteine. The protein operates within tRNA modification; N(7)-methylguanine-tRNA biosynthesis. Functionally, catalyzes the formation of N(7)-methylguanine at position 46 (m7G46) in tRNA. The protein is tRNA (guanine-N(7)-)-methyltransferase of Drosophila virilis (Fruit fly).